Reading from the N-terminus, the 38-residue chain is MTPSLANFLWSLLYGAVVLGLLFGAIVFVSQRDRVRRR.

A helical transmembrane segment spans residues 8–28 (FLWSLLYGAVVLGLLFGAIVF).

It belongs to the PsbX family. Type 1 subfamily. In terms of assembly, PSII is composed of 1 copy each of membrane proteins PsbA, PsbB, PsbC, PsbD, PsbE, PsbF, PsbH, PsbI, PsbJ, PsbK, PsbL, PsbM, PsbT, PsbX, PsbY, PsbZ, Psb30/Ycf12, peripheral proteins PsbO, CyanoQ (PsbQ), PsbU, PsbV and a large number of cofactors. It forms dimeric complexes.

It localises to the cellular thylakoid membrane. In terms of biological role, involved in the binding and/or turnover of quinones at the Q(B) site of photosystem II (PSII). PSII is a light-driven water plastoquinone oxidoreductase, using light energy to abstract electrons from H(2)O, generating a proton gradient subsequently used for ATP formation. The sequence is that of Photosystem II reaction center protein X 1 from Synechococcus sp. (strain JA-3-3Ab) (Cyanobacteria bacterium Yellowstone A-Prime).